Reading from the N-terminus, the 369-residue chain is MDQDALISKEDSEVEREASGGRESLSDVIGFLDAVLSSEPTDIGGDRSWLHNTINTLQRPGSTHRAKGEGEGEVSTSSTQDNRSGEESRVSGGTSEPEAEAHARNVDKQNIHWATGRGASTDSVPQDLGNGRDSGILEDPPNEGGYPRSGAEDENREMAANPDKRGEDQAEGLPEEIRRSAPLPDEGEGRADNNGRGVESGSPHSARVTGVLVIPSPELEEAVLQRNKRRPANSGSRSLTPVVVPSTRSPPPDHDNSTRSPPRKPPTTQDEHTNPRNTPAVRIKDRRPPTGTRSAPDRPTDGYPTHPGPETDATKKGHRREHIIYERDGYIVNESWCNPVCSRIRVISRRELCVCKACPKICKLCRDDI.

Disordered stretches follow at residues M1–S24 and S38–R320. Positions I7–G20 are enriched in basic and acidic residues. Residues L50–G61 show a composition bias toward polar residues. Composition is skewed to basic and acidic residues over residues A99–N110 and G150–D168. S249, S257, and S260 each carry phosphoserine; by host. Zn(2+) is bound by residues H318, C337, C341, C353, C355, C358, C362, and C365.

Belongs to the paramyxoviruses V protein family. Interacts with host IFIH1/MDA5 and DHX58/LGP2. Interacts with host IRF3. Interacts with host RIGI regulatory protein (via CARDs domain) and host TRIM25 (via SPRY domain); these interactions prevent TRIM25-mediated ubiquitination of RIG-I and disrupts downstream RIG-I signaling.

The protein localises to the host cytoplasm. Plays an essential role in the inhibition of host immune response. Prevents the establishment of cellular antiviral state by blocking interferon-alpha/beta (IFN-alpha/beta) production and signaling pathway. Interacts with host IFIH1/MDA5 and DHX58/LGP2 to inhibit the transduction pathway involved in the activation of IFN-beta promoter, thus protecting the virus against cell antiviral state. Also interacts with and inhibits host IRF3. Blocks the type I interferon signaling pathway by disrupting the RIG-I signaling pathway. The sequence is that of Protein V (P/V/C) from Sendai virus (strain Hamamatsu) (SeV).